We begin with the raw amino-acid sequence, 172 residues long: Large ribosomal subunit protein uL10 (172 aa).

It belongs to the universal ribosomal protein uL10 family. Part of the ribosomal stalk of the 50S ribosomal subunit. The N-terminus interacts with L11 and the large rRNA to form the base of the stalk. The C-terminus forms an elongated spine to which L12 dimers bind in a sequential fashion forming a multimeric L10(L12)X complex.

Forms part of the ribosomal stalk, playing a central role in the interaction of the ribosome with GTP-bound translation factors. The protein is Large ribosomal subunit protein uL10 of Xanthobacter autotrophicus (strain ATCC BAA-1158 / Py2).